A 76-amino-acid chain; its full sequence is Omega-conotoxin MoVIA (76 aa).

The N-terminal stretch at 1–22 is a signal peptide; that stretch reads MKLTCVVIVAVLFLTACQLITA. A propeptide spanning residues 23 to 45 is cleaved from the precursor; sequence DDSRSTQRHRALRSTTKLSMSTR. Intrachain disulfides connect Cys46–Cys61, Cys53–Cys64, and Cys60–Cys71. Hydroxyproline is present on residues Pro49 and Pro55.

This sequence belongs to the conotoxin O1 superfamily. In terms of tissue distribution, expressed by the venom duct.

The protein resides in the secreted. Functionally, omega-conotoxins act at presynaptic membranes, they bind and block voltage-gated calcium channels (Cav). This toxin potently blocks mammalian N-type calcium channels (Cav2.2/CACNA1B) (IC(50)=330 nM on human channels). It is 9-fold more potent in displacing radiolabeled omega-conotoxin GVIA from fish brain membranes than from human SH-SY5Y cells. Its function is as follows. Omega-conotoxins act at presynaptic membranes, they bind and block voltage-gated calcium channels (Cav). This toxin potently blocks mammalian N-type calcium channels (Cav2.2/CACNA1B) (IC(50)=600 nM on human channels). It is 60-fold more potent in displacing radiolabeled omega-conotoxin GVIA from fish brain membranes than from human SH-SY5Y cells. In vivo, when tested on rat neuropathic pain model, this toxin shows an analgesic activity. In Conus moncuri (Sea snail), this protein is Omega-conotoxin MoVIA.